The sequence spans 492 residues: Endoglucanase 15 (492 aa).

The N-terminal stretch at 1 to 30 is a signal peptide; sequence MSCISSQCFITIKSICIVLLLSITCGAVSA. D86 serves as the catalytic Nucleophile. Catalysis depends on residues H414, D466, and E475.

This sequence belongs to the glycosyl hydrolase 9 (cellulase E) family.

It localises to the secreted. The enzyme catalyses Endohydrolysis of (1-&gt;4)-beta-D-glucosidic linkages in cellulose, lichenin and cereal beta-D-glucans.. This chain is Endoglucanase 15, found in Arabidopsis thaliana (Mouse-ear cress).